Here is a 350-residue protein sequence, read N- to C-terminus: Secreted effector protein PipB2 (350 aa).

Pentapeptide repeat domains follow at residues Ala162–Gly201, Thr202–Gly241, Cys247–Asp286, and Ala287–His326.

In terms of assembly, interacts with the host kinesin light chain (KLC), a subunit of the kinesin-1 motor complex.

The protein resides in the secreted. It is found in the host membrane. Effector proteins function to alter host cell physiology and promote bacterial survival in host tissues. Involved in the reorganization of late endosome/lysosome (LE/Lys) compartments in mammalian cells. Necessary and sufficient to link kinesin-1 onto the Salmonella-containing vacuole (SCV) membrane. Required for centrifugal extension of lysosomal glycoprotein-rich membrane tubules, known as Salmonella-induced filaments (Sifs), away from the SCV and toward the cell periphery. Required for virulence, but not for intracellular survival and replication in phagocytic cells. This chain is Secreted effector protein PipB2 (pipB2), found in Salmonella paratyphi A (strain ATCC 9150 / SARB42).